The sequence spans 113 residues: Protein RALF-like 31 (113 aa).

A signal peptide spans 1–21 (MFNSTALVIFAILFLLISADA). Positions 22-58 (FPIPSPNGEIDAMLIRNSIIGEDEDLMPTEISRRVLM) are cleaved as a propeptide — removed in mature form. 2 disulfide bridges follow: Cys76-Cys86 and Cys98-Cys104.

This sequence belongs to the plant rapid alkalinization factor (RALF) family. In terms of processing, proteolytically cleaved, probably by S1P, a subtilisin-like serine protease (subtilase).

The protein resides in the secreted. Cell signaling peptide that may regulate plant stress, growth, and development. Mediates a rapid alkalinization of extracellular space by mediating a transient increase in the cytoplasmic Ca(2+) concentration leading to a calcium-dependent signaling events through a cell surface receptor and a concomitant activation of some intracellular mitogen-activated protein kinases. The protein is Protein RALF-like 31 (RALFL31) of Arabidopsis thaliana (Mouse-ear cress).